The primary structure comprises 219 residues: Ion-translocating oxidoreductase complex subunit G (219 aa).

The helical transmembrane segment at G25–A45 threads the bilayer. T187 carries the post-translational modification FMN phosphoryl threonine.

This sequence belongs to the RnfG family. The complex is composed of six subunits: RnfA, RnfB, RnfC, RnfD, RnfE and RnfG. FMN is required as a cofactor.

It localises to the cellular chromatophore membrane. Its function is as follows. Part of a membrane-bound complex that couples electron transfer with translocation of ions across the membrane. In Cereibacter sphaeroides (strain ATCC 17029 / ATH 2.4.9) (Rhodobacter sphaeroides), this protein is Ion-translocating oxidoreductase complex subunit G.